Here is an 864-residue protein sequence, read N- to C-terminus: DNA mismatch repair protein MutS (864 aa).

613-620 (GPNMGGKS) is a binding site for ATP.

The protein belongs to the DNA mismatch repair MutS family.

Its function is as follows. This protein is involved in the repair of mismatches in DNA. It is possible that it carries out the mismatch recognition step. This protein has a weak ATPase activity. This is DNA mismatch repair protein MutS from Actinobacillus pleuropneumoniae serotype 7 (strain AP76).